We begin with the raw amino-acid sequence, 737 residues long: Relaxin receptor 2 (737 aa).

The Extracellular portion of the chain corresponds to Met-1–Asn-399. The LDL-receptor class A domain occupies Leu-27–Gly-64. Cystine bridges form between Cys-28–Cys-41, Cys-35–Cys-54, and Cys-48–Cys-63. Residue Asn-37 is glycosylated (N-linked (GlcNAc...) asparagine). Asn-121 is a glycosylation site (N-linked (GlcNAc...) asparagine). LRR repeat units lie at residues Asn-121–Lys-142, Gln-145–Gly-166, Asn-169–Asp-190, Gln-193–Gly-214, Ser-217–Gln-238, Gln-241–Ser-262, Ser-265–Ser-286, Asn-289–Asp-310, Leu-313–Ser-334, and Gln-337–Pro-358. Asn-257 carries N-linked (GlcNAc...) asparagine glycosylation. Residue Asn-318 is glycosylated (N-linked (GlcNAc...) asparagine). N-linked (GlcNAc...) asparagine glycosylation occurs at Asn-361. Residues Ile-400–Ile-420 traverse the membrane as a helical segment. Residues Gly-421–Lys-438 lie on the Cytoplasmic side of the membrane. The helical transmembrane segment at Ile-439–Ile-459 threads the bilayer. At Lys-460–Cys-478 the chain is on the extracellular side. The cysteines at positions 478 and 556 are disulfide-linked. A helical membrane pass occupies residues Arg-479–Leu-501. Residues Glu-502–Gln-520 lie on the Cytoplasmic side of the membrane. The chain crosses the membrane as a helical span at residues Thr-521 to Trp-541. Residues Lys-542 to Gly-575 are Extracellular-facing. The helical transmembrane segment at Ile-576–Phe-596 threads the bilayer. The Cytoplasmic portion of the chain corresponds to Cys-597–Arg-622. A helical membrane pass occupies residues Phe-623 to Leu-643. Topologically, residues Ser-644–Thr-653 are extracellular. A helical membrane pass occupies residues Ile-654–Tyr-674. Over Thr-675–Ser-737 the chain is Cytoplasmic.

This sequence belongs to the G-protein coupled receptor 1 family.

The protein localises to the cell membrane. Functionally, receptor for relaxin. The activity of this receptor is mediated by G proteins leading to stimulation of adenylate cyclase and an increase of cAMP. May also be a receptor for Leydig insulin-like peptide (INSL3). The chain is Relaxin receptor 2 (RXFP2) from Canis lupus familiaris (Dog).